The primary structure comprises 358 residues: D-alanine--D-alanine ligase B (358 aa).

Residues 147–352 (KYVLENFKFK…YSALIDELIE (206 aa)) enclose the ATP-grasp domain. Residue 179–234 (VEKLQYDVFIKPANSGSSVGITKAHNKEELLKGLEEAFIHDKNVLVEEAINAREIE) participates in ATP binding. Residues Asp-305, Glu-319, and Asn-321 each coordinate Mg(2+).

This sequence belongs to the D-alanine--D-alanine ligase family. Requires Mg(2+) as cofactor. Mn(2+) serves as cofactor.

The protein resides in the cytoplasm. It catalyses the reaction 2 D-alanine + ATP = D-alanyl-D-alanine + ADP + phosphate + H(+). Its pathway is cell wall biogenesis; peptidoglycan biosynthesis. Functionally, cell wall formation. The chain is D-alanine--D-alanine ligase B from Clostridium tetani (strain Massachusetts / E88).